Here is a 329-residue protein sequence, read N- to C-terminus: Ribonucleoside-diphosphate reductase small chain (329 aa).

Fe cation is bound by residues D75, E106, and H109. Y113 is an active-site residue. Positions 168, 202, and 205 each coordinate Fe cation.

This sequence belongs to the ribonucleoside diphosphate reductase small chain family. As to quaternary structure, heterodimer of a large and a small chain. Fe cation is required as a cofactor.

It is found in the cytoplasm. The enzyme catalyses a 2'-deoxyribonucleoside 5'-diphosphate + [thioredoxin]-disulfide + H2O = a ribonucleoside 5'-diphosphate + [thioredoxin]-dithiol. Provides the precursors necessary for DNA synthesis. Catalyzes the biosynthesis of deoxyribonucleotides from the corresponding ribonucleotides. The chain is Ribonucleoside-diphosphate reductase small chain from Nicotiana tabacum (Common tobacco).